The sequence spans 251 residues: 5-oxoprolinase subunit A (251 aa).

The protein belongs to the LamB/PxpA family. In terms of assembly, forms a complex composed of PxpA, PxpB and PxpC.

It catalyses the reaction 5-oxo-L-proline + ATP + 2 H2O = L-glutamate + ADP + phosphate + H(+). Catalyzes the cleavage of 5-oxoproline to form L-glutamate coupled to the hydrolysis of ATP to ADP and inorganic phosphate. This chain is 5-oxoprolinase subunit A, found in Vibrio campbellii (strain ATCC BAA-1116).